A 415-amino-acid polypeptide reads, in one-letter code: Multidrug resistance protein MdtA (415 aa).

The first 21 residues, 1 to 21, serve as a signal peptide directing secretion; sequence MKGSYKSRWVIVIVVVIAAIA. Disordered stretches follow at residues 32 to 60 and 392 to 415; these read SRSAAPGATKQAQQSPAGGRRGMRSGPLA and EAQSATTPEEKATSREYAKKGARS. Positions 399 to 415 are enriched in basic and acidic residues; the sequence is PEEKATSREYAKKGARS.

It belongs to the membrane fusion protein (MFP) (TC 8.A.1) family. Part of a tripartite efflux system composed of MdtA, MdtB and MdtC.

It is found in the cell inner membrane. The MdtABC tripartite complex confers resistance against novobiocin and deoxycholate. The protein is Multidrug resistance protein MdtA of Escherichia coli (strain 55989 / EAEC).